Consider the following 152-residue polypeptide: Small ribosomal subunit protein uS13A (152 aa).

It belongs to the universal ribosomal protein uS13 family. As to quaternary structure, component of the small ribosomal subunit (SSU). Mature yeast ribosomes consist of a small (40S) and a large (60S) subunit. The 40S small subunit contains 1 molecule of ribosomal RNA (18S rRNA) and at least 33 different proteins. The large 60S subunit contains 3 rRNA molecules (25S, 5.8S and 5S rRNA) and at least 46 different proteins.

The protein resides in the cytoplasm. Functionally, component of the ribosome, a large ribonucleoprotein complex responsible for the synthesis of proteins in the cell. The small ribosomal subunit (SSU) binds messenger RNAs (mRNAs) and translates the encoded message by selecting cognate aminoacyl-transfer RNA (tRNA) molecules. The large subunit (LSU) contains the ribosomal catalytic site termed the peptidyl transferase center (PTC), which catalyzes the formation of peptide bonds, thereby polymerizing the amino acids delivered by tRNAs into a polypeptide chain. The nascent polypeptides leave the ribosome through a tunnel in the LSU and interact with protein factors that function in enzymatic processing, targeting, and the membrane insertion of nascent chains at the exit of the ribosomal tunnel. This chain is Small ribosomal subunit protein uS13A (rps1801), found in Schizosaccharomyces pombe (strain 972 / ATCC 24843) (Fission yeast).